The following is a 534-amino-acid chain: NAD(P)H-quinone oxidoreductase chain 4 (534 aa).

14 consecutive transmembrane segments (helical) span residues 12-32 (FPWL…IPFF), 44-64 (FALS…INGF), 96-116 (MPLI…AWPV), 120-140 (PKLF…VFAV), 144-164 (LLFF…LAIW), 176-196 (FIIY…AMGF), 220-240 (ILCY…VPLH), 251-271 (TAPV…YALL), 285-305 (FAPL…LTSF), 314-334 (IAYS…SFSS), 340-360 (AMLQ…LVGA), 384-404 (FALW…SGFV), 425-445 (VVMA…LLSM), and 472-492 (VYII…PRLV).

It belongs to the complex I subunit 4 family.

Its subcellular location is the cellular thylakoid membrane. The enzyme catalyses a plastoquinone + NADH + (n+1) H(+)(in) = a plastoquinol + NAD(+) + n H(+)(out). The catalysed reaction is a plastoquinone + NADPH + (n+1) H(+)(in) = a plastoquinol + NADP(+) + n H(+)(out). Its function is as follows. NDH-1 shuttles electrons from NAD(P)H, via FMN and iron-sulfur (Fe-S) centers, to quinones in the respiratory chain. The immediate electron acceptor for the enzyme in this species is believed to be plastoquinone. Couples the redox reaction to proton translocation (for every two electrons transferred, four hydrogen ions are translocated across the cytoplasmic membrane), and thus conserves the redox energy in a proton gradient. The polypeptide is NAD(P)H-quinone oxidoreductase chain 4 (Prochlorococcus marinus (strain AS9601)).